A 143-amino-acid polypeptide reads, in one-letter code: Large ribosomal subunit protein uL11 (143 aa).

This sequence belongs to the universal ribosomal protein uL11 family. As to quaternary structure, part of the ribosomal stalk of the 50S ribosomal subunit. Interacts with L10 and the large rRNA to form the base of the stalk. L10 forms an elongated spine to which L12 dimers bind in a sequential fashion forming a multimeric L10(L12)X complex. One or more lysine residues are methylated.

In terms of biological role, forms part of the ribosomal stalk which helps the ribosome interact with GTP-bound translation factors. The sequence is that of Large ribosomal subunit protein uL11 from Caulobacter sp. (strain K31).